The sequence spans 163 residues: Photosystem II extrinsic protein V (163 aa).

The signal sequence occupies residues 1–26; the sequence is MLKRSSWLATLLGLLTVASVSTIVYA. C63, C66, H67, and H118 together coordinate heme c.

Belongs to the cytochrome c family. PsbV subfamily. PSII is composed of 1 copy each of membrane proteins PsbA, PsbB, PsbC, PsbD, PsbE, PsbF, PsbH, PsbI, PsbJ, PsbK, PsbL, PsbM, PsbT, PsbY, PsbZ, Psb30/Ycf12, at least 3 peripheral proteins of the oxygen-evolving complex and a large number of cofactors. It forms dimeric complexes. The extrinsic subunits in red algae are PsbO (OEC33), PsbQ', cytochrome c-550 and PsbU. Heme c serves as cofactor.

The protein localises to the plastid. It localises to the chloroplast thylakoid membrane. In terms of biological role, one of the extrinsic, lumenal subunits of photosystem II (PSII). PSII is a light-driven water plastoquinone oxidoreductase, using light energy to abstract electrons from H(2)O, generating a proton gradient subsequently used for ATP formation. The extrinsic proteins stabilize the structure of photosystem II oxygen-evolving complex (OEC), the ion environment of oxygen evolution and protect the OEC against heat-induced inactivation. This is Photosystem II extrinsic protein V from Porphyra purpurea (Red seaweed).